Reading from the N-terminus, the 825-residue chain is Probable phosphoketolase (825 aa).

The protein belongs to the XFP family. It depends on thiamine diphosphate as a cofactor.

The polypeptide is Probable phosphoketolase (Schizosaccharomyces pombe (strain 972 / ATCC 24843) (Fission yeast)).